Consider the following 371-residue polypeptide: Alanine racemase (371 aa).

The active-site Proton acceptor; specific for D-alanine is Lys-40. Lys-40 is subject to N6-(pyridoxal phosphate)lysine. Arg-136 serves as a coordination point for substrate. The active-site Proton acceptor; specific for L-alanine is the Tyr-263. Met-310 contributes to the substrate binding site.

The protein belongs to the alanine racemase family. The cofactor is pyridoxal 5'-phosphate.

The enzyme catalyses L-alanine = D-alanine. It functions in the pathway amino-acid biosynthesis; D-alanine biosynthesis; D-alanine from L-alanine: step 1/1. Functionally, catalyzes the interconversion of L-alanine and D-alanine. May also act on other amino acids. This is Alanine racemase (alr) from Streptococcus mutans serotype c (strain ATCC 700610 / UA159).